Here is a 414-residue protein sequence, read N- to C-terminus: Paired box protein Pax-2 (414 aa).

The paired DNA-binding region spans 15 to 141 (RHGGVNQLGG…SSINRIIRTK (127 aa)). Residues 18-74 (GVNQLGGVFVNGRPLPDVVRQRIVELAHQGVRPCDISRQLRVSHGCVSKILGRYYET) are PAI subdomain. The tract at residues 93 to 141 (KVVDKIAEYKRQNPTMFAWEIRDRLLAEGICDNDTVPSVSSINRIIRTK) is RED subdomain. Thr-225 carries the phosphothreonine modification.

In terms of assembly, interacts with ELGN3; the interaction targets PAX2 for destruction. Interacts with TLE4. As to expression, kidney and nephrogenic rests.

The protein resides in the nucleus. Its function is as follows. Transcription factor that may have a role in kidney cell differentiation. In Mus musculus (Mouse), this protein is Paired box protein Pax-2 (Pax2).